A 172-amino-acid polypeptide reads, in one-letter code: Adenine phosphoribosyltransferase (172 aa).

It belongs to the purine/pyrimidine phosphoribosyltransferase family. In terms of assembly, homodimer.

It is found in the cytoplasm. The catalysed reaction is AMP + diphosphate = 5-phospho-alpha-D-ribose 1-diphosphate + adenine. It functions in the pathway purine metabolism; AMP biosynthesis via salvage pathway; AMP from adenine: step 1/1. Its function is as follows. Catalyzes a salvage reaction resulting in the formation of AMP, that is energically less costly than de novo synthesis. This Herpetosiphon aurantiacus (strain ATCC 23779 / DSM 785 / 114-95) protein is Adenine phosphoribosyltransferase.